Here is a 202-residue protein sequence, read N- to C-terminus: Complement component C8 gamma chain (202 aa).

Residues 1–20 (MLPPGTATLLTLLLAAGSLG) form the signal peptide. At Q21 the chain carries Pyrrolidone carboxylic acid. C96 and C188 form a disulfide bridge.

Belongs to the calycin superfamily. Lipocalin family. Heterotrimer of 3 chains: alpha (C8A), beta (C8B) and gamma (C8G); the alpha and gamma chains are disulfide bonded. Component of the membrane attack complex (MAC), composed of complement C5b, C6, C7, C8A, C8B, C8G and multiple copies of the pore-forming subunit C9.

Its subcellular location is the secreted. The protein localises to the target cell membrane. Membrane attack complex (MAC) assembly is inhibited by CD59, thereby protecting self-cells from damage during complement activation. MAC assembly is also inhibited by clusterin (CLU) chaperones that inhibit polymerization of C9. Component of the membrane attack complex (MAC), a multiprotein complex activated by the complement cascade, which inserts into a target cell membrane and forms a pore, leading to target cell membrane rupture and cell lysis. The MAC is initiated by proteolytic cleavage of C5 into complement C5b in response to the classical, alternative, lectin and GZMK complement pathways. The complement pathways consist in a cascade of proteins that leads to phagocytosis and breakdown of pathogens and signaling that strengthens the adaptive immune system. C8G, together with C8A and C8B, inserts into the target membrane, but does not form pores by itself. During MAC assembly, associates with C5b, C6 and C7 to form the C5b8 intermediate complex that inserts into the target membrane and traverses the bilayer increasing membrane rigidity. The sequence is that of Complement component C8 gamma chain from Homo sapiens (Human).